Reading from the N-terminus, the 167-residue chain is Phosphopantetheine adenylyltransferase (167 aa).

Residue Ser-9 participates in substrate binding. ATP is bound by residues 9-10 and His-17; that span reads SF. Substrate contacts are provided by Lys-41, Val-78, and Arg-92. Residues 93-95, Glu-103, and 128-134 contribute to the ATP site; these read GLR and SRPITAT.

The protein belongs to the bacterial CoaD family. Homohexamer. Requires Mg(2+) as cofactor.

It is found in the cytoplasm. The enzyme catalyses (R)-4'-phosphopantetheine + ATP + H(+) = 3'-dephospho-CoA + diphosphate. It functions in the pathway cofactor biosynthesis; coenzyme A biosynthesis; CoA from (R)-pantothenate: step 4/5. In terms of biological role, reversibly transfers an adenylyl group from ATP to 4'-phosphopantetheine, yielding dephospho-CoA (dPCoA) and pyrophosphate. This chain is Phosphopantetheine adenylyltransferase, found in Rhizobium rhizogenes (strain K84 / ATCC BAA-868) (Agrobacterium radiobacter).